The sequence spans 2530 residues: MVGERRAGNLLVPLGPRLQAYPEELLRQRPGHDGHPEYLIRWSVLKCSEEGKVSSEEEKTEHLLMWLSAPEVYANCPMLLRERPIPKGPQHEPAGEVGSFPRDPGGLDELAMTEMEADVRALVRRAARQLAEGGTSSLTAAVLHTVHVLSAYASIGPLTGVFRETGALDLLMHMLCNPEPQIRRSAGKMLQALAAHDAGSRAHVLLSLSQHDGIEQHMDFDSRYTLLELFAETTSTEEHCMALEGIHLPQIPGKLLFSLVKRYLCVTSLLDQLNNSPESGAGDQSSPCLTKEKSRAQQELEFSMAVGNLISELVRSMGWARNLSEQGALPPRPSRSIFQPCLSGPPPLLLPTIVTTPRKQGRAFRGRSEFSSRSGYGEYVQQTVQPGMRVRILDDYEEISAGDEGEFQQSNNGVPPVQVFWQSTGRTYWVHWHMLEILGPEEATGDSASAAVEKGAGAAVLGTVCPSWDWKPTHGLYSLPYLQPEPQKNEEESGYLTQAEWWELLFFIKKLDVGEQQPIFQNLHEKLDEEALGEKALGELSVPIEMAEGVLQVLSNRFEGSNLCDLLNSRIYTKYGLLPKELGSLPSSRRHSCSPEPEEGSRSAANFSEKEEACRANAVPPEAEMELASAKTEPPKAQSDSQLFNQLLVTEGMTLPPETQEAATEMARALRGPGPRSSLDQHVAAVLATVQISSLDTNLQLSGLCALSQAVEEVTERDHPLVRPDRPLREKLVKTLVDLLTNQVGEKMVVVMALRLLYLLMTKHEWRPLFAREGGIYAVLICMQEYKTSVLVQQAGLAALKMLAIANSSDVPTFIPSRDSIQPLFDTQMTREIFASIDSATRPGSESLLLSVPAAVVLMLNTEGCSSAVRNGLLLLNLLLCNHHTLGDQIITQELRDTLFRHSGIAPGTEPMPTTRTILTMLLSRYSEPRGSPERAVLETPSTQGQDGSPESLIRSLVGDLSAELFLDLERVLCHEGSPPAAVRPLLRRLQQETQPFLLLLRTLDAPGPNRTLLLTILRVMTRLLDHPETMVLPWHEVLEPCLNCLNGPSSDSEVVQEVTCFLHRLALMQKDYAVVLCCLGGKEALSKVLDKHSTQLLLASELRHLVAECEKYSQLCSNLTSSILAGCIQMVLGQIEDHRRTYKPITIPFFDVFLRHLCQGSSVEVKEDRCWEKVEVSSNPHRASKLTDRNPKTYWESNGSTGSHSITLHMHRGVLIRQLTLLVASEDSSYMPARVVVFGGDNVGCISTELNTVNVMPSASRVTLLENLTRFWPIIQIRIKRCQQGGIDTRVRGVEVLGPKPTFWPLFREQLCRRTCLFYTIRAQAWSRDIAEDRQRLLQLYPRLNRVLRHEQNFADRFLPDDEAAQALGKTCWEALVSPLVQNITSPDAGGVSSLGWLLDQYLEHRESTRSRQGPAASFASQVRRLCHLLVHVEAPPGPSPEPSSQPLSKNSKGQDGSPTPAPTPVCPSTSLRNLTQCWLSVVQGQVSRFLAAAWRASDFVPRYCSLYQRLQSAGSELFGPRAAFTLALRSGFSGALLQQSFLTAAHISEQFARHIDQQIHGGLLGGAAGVGMLGRLQRHLEPIMVLSGLELATTFEHFYQHYMADRLLSLGSSWLEGAVLEQIGPCFPNRLPQLMLQSLHTSEELQHRFHLFQLQQLDRQLLEQGDQEEWRPEKVEEDDEGQETGRELFTDPGPAISVLVLSPRCWPVSPLCYLHHPRKHLQAELCDALERFSSFYSHSQNCPVLDIGPHRRLQWTWLGRAELQFGDQTLHVSTVQMWLLLNFNQSEEVSVETLLRNSDLSPELLHQALLPLTSDNGPLTLEETQDYPQGGVLRLREPRSQTHEEVLWLIPPQTYLSVEKDEGRTLEQKRNLLSCLLVRILKAHREKGLHIDQLVCLVLEAWQKGPDPPGRLGNAAAVGVACSSTDVLSCILHLLGQGYVERRDDRPQVLMYATPEPMGPCRGQADVPFCGNKNTETSRPSPEAVVALASLQLPAGRTMSPQEVEGLMEQTVRQVQETLNLEPDVAQHLLAHSHWGTEQLLQSYSDDPEPLLLAAGLRVPQAQVVPTRPDQCPVCVTPLGPHDDSPSLCCLHCCCKSCWNEYLTTRIEQNFVLNCTCPIADCPAQPTGAFIRNIVSSPEVISKYEKALLRGYVESCSNLTWCTNPQGCDRILCRQGLGSGTTCSKCGWASCFSCSFPEAHYPASCGHMSQWVDDGGYYDGMSVEAQSKHLAKLISKRCPSCQAPIEKNEGCLHMTCARCNHGFCWRCLKSWKPSHKDYYNCSAMVSKAARQEKRFQDYNERCTFHHQAREFAVNLRNQASAIQEVPPPKSFTFLQDACRALEQARKVLAYACVYSFYSQDTEYMDVVEQQTENLELHTNALQILLEETLLRCRDLASSLRFLRADCLSTGTELLRRIQERLLAILQHSTQDFRVGLQSPSVETREVKGSNVPSDQPQGSSGLEVEDEEEEEEEEEEEEEEEEEDVPEWQHEFDEELDNDSFSYDEESENLDRETFFFGDEDEDDESYD.

Residue Lys87 forms a Glycyl lysine isopeptide (Lys-Gly) (interchain with G-Cter in ubiquitin) linkage. One can recognise a CPH domain in the interval 367–440 (RSEFSSRSGY…HWHMLEILGP (74 aa)). 2 disordered regions span residues 585-639 (LPSS…KAQS) and 930-951 (RGSP…GSPE). Over residues 940–949 (TPSTQGQDGS) the composition is skewed to polar residues. Ser978 is modified (phosphoserine). The 180-residue stretch at 1145-1324 (PITIPFFDVF…RTCLFYTIRA (180 aa)) folds into the DOC domain. Residue 1365 to 1372 (AAQALGKT) participates in ATP binding. Disordered regions lie at residues 1435–1468 (EAPP…TPVC) and 1667–1690 (GDQE…GREL). Ser1459 carries the post-translational modification Phosphoserine. Residue Lys1884 forms a Glycyl lysine isopeptide (Lys-Gly) (interchain with G-Cter in NEDD8) linkage. Positions 2070–2287 (RPDQCPVCVT…KDYYNCSAMV (218 aa)) are TRIAD supradomain. 18 residues coordinate Zn(2+): Cys2074, Cys2077, Cys2092, His2094, Cys2097, Cys2100, Cys2119, Cys2124, Cys2164, Cys2170, Cys2185, Cys2188, Cys2193, Cys2196, His2202, Cys2207, Cys2240, and Cys2243. The RING-type 1 zinc-finger motif lies at 2074 to 2124 (CPVCVTPLGPHDDSPSLCCLHCCCKSCWNEYLTTRIEQNFVLNCTCPIADC). An IBR-type zinc finger spans residues 2144–2207 (SKYEKALLRG…FPEAHYPASC (64 aa)). Residues 2240 to 2269 (CPSCQAPIEKNEGCLHMTCARCNHGFCWRC) form an RING-type 2; atypical zinc finger. The active site involves Cys2253. Cys2258, Cys2261, Cys2266, Cys2269, His2277, and Cys2283 together coordinate Zn(2+). Ser2440 is modified (phosphoserine). Residues 2443–2530 (VETREVKGSN…DEDEDDESYD (88 aa)) form a disordered region. Positions 2452–2462 (NVPSDQPQGSS) are enriched in polar residues. The stretch at 2459-2500 (QGSSGLEVEDEEEEEEEEEEEEEEEEEDVPEWQHEFDEELDN) forms a coiled coil. Composition is skewed to acidic residues over residues 2465 to 2510 (EVED…EESE) and 2520 to 2530 (GDEDEDDESYD).

Belongs to the cullin family. In terms of assembly, component of a Cul9-RING complex consisting of CUL9 and RBX1; the CUL9-RBX1 complex is a heterododecamer composed of six CUL9 and six RBX1 protomers. Interacts (via C-terminal TRIAD/RBR supradomain) with E2 ubiquitin-conjugating enzyme UBE2L3. Interacts with CUL7; the interaction with the CUL7 component of the 3M complex leads to inhibition of CUL9 activity. The CUL7-CUL9 heterodimer seems to interact specifically with TP53, likely via the CPH domain. Forms a complex with p53/TP53 in the cytoplasm of unstressed cells. Interacts with UBCH7 and UBCH8. In terms of processing, autoubiquitinated by the CUL9-RBX1 complex at Lys-87. Post-translationally, neddylated. Neddylation is mediated by E1 enzyme UBA3-NAE1 complex and E2 enzyme UBE2F. Structural rearrangment of the C-terminal TRIAD/RBR supradomain may play a role in neddylation and deneddylation.

Its subcellular location is the cytoplasm. In terms of biological role, core component of the Cul9-RING ubiquitin-protein ligase complex composed of CUL9 and RBX1. The CUL9-RBX1 complex mediates ubiquitination and subsequent degradation of BIRC5 and is required to maintain microtubule dynamics and genome integrity. Acts downstream of the 3M complex, which inhibits CUL9 activity and the ubiquitination of BIRC5. The CUL9-RBX1 complex also mediates mono-ubiquitination of p53/TP53. Acts as a cytoplasmic anchor protein in p53/TP53-associated protein complex. Regulates the subcellular localization of p53/TP53 and its subsequent function. Ubiquitinates apurinic/apyrimidinic endodeoxyribonuclease APEX2. Ubiquitination by the CUL9-RBX1 complex is predominantly mediated by E2 ubiquitin-conjugating enzymes UBE2L3 and UBE2D2. This Mus musculus (Mouse) protein is Cullin-9 (Cul9).